A 187-amino-acid polypeptide reads, in one-letter code: Endoribonuclease YbeY (187 aa).

His-148, His-152, and His-158 together coordinate Zn(2+).

It belongs to the endoribonuclease YbeY family. Zn(2+) is required as a cofactor.

The protein resides in the cytoplasm. In terms of biological role, single strand-specific metallo-endoribonuclease involved in late-stage 70S ribosome quality control and in maturation of the 3' terminus of the 16S rRNA. This is Endoribonuclease YbeY from Ralstonia nicotianae (strain ATCC BAA-1114 / GMI1000) (Ralstonia solanacearum).